An 820-amino-acid polypeptide reads, in one-letter code: Phospholipase D alpha 3 (820 aa).

The C2 domain occupies 1-133 (MTEQLLLHGT…ITGQPIDRWL (133 aa)). D194 provides a ligand contact to Ca(2+). Residues 334 to 371 (TMFTHHQKTIVVDSEVDGSLTKRRIVSFLGGIDLCDGR) form the PLD phosphodiesterase 1 domain. Active-site residues include H339, K341, and D346. H339 lines the a 1,2-diacyl-sn-glycero-3-phosphate pocket. 2 residues coordinate Ca(2+): H377 and H411. Positions 528 and 667 each coordinate a 1,2-diacyl-sn-glycero-3-phosphate. The PLD phosphodiesterase 2 domain occupies 662–689 (FMIYVHSKMMIVDDEYIIIGSANINQRS). Residues H667, K669, and D674 contribute to the active site. E730 lines the Ca(2+) pocket.

The protein belongs to the phospholipase D family. C2-PLD subfamily. Ca(2+) is required as a cofactor. As to expression, expressed in buds, flowers, siliques, stems, old leaves and roots. Expressed in the sieve elements.

Its subcellular location is the cytoplasm. It localises to the membrane. It catalyses the reaction a 1,2-diacyl-sn-glycero-3-phosphocholine + H2O = a 1,2-diacyl-sn-glycero-3-phosphate + choline + H(+). Functionally, hydrolyzes glycerol-phospholipids at the terminal phosphodiesteric bond to generate phosphatidic acids (PA). Active with phosphatidylcholine (PC), phosphatidylethanolamine (PE), phosphatidylglycerol (PG), and phosphatidylserine (PS) as substrates. No activity toward phosphatidylinositol (PI) or PIP2. Positively mediates plant responses to hyperosmotic stresses and promotes root growth, flowering, and stress avoidance. Not involved in the abscisic acid regulation of stomatal movement and transpirational water loss. This is Phospholipase D alpha 3 from Arabidopsis thaliana (Mouse-ear cress).